A 295-amino-acid polypeptide reads, in one-letter code: MTDAKLIDGNLFSAKLRETITARVAEMKAAHHITPGLAVVLVGEDPASQVYVRTKGKRTVETGMRSFEHKLPADTPEDALLLLIESLNKDPEVHGILVQLPVPKHIDTQKVIEAIDPAKDVDGFHPVNVGRLAAGGDALVPCTPLGSLLLLKDTLGKLGGLDAVVIGRSNIVGKPMAQLLIKESCTVTVAHSQTKDLPGVVRRADIVIAAVGRPEMIKGDWIKPGATVIDVGINRIELPDGTKKLVGDVDFASAVKVAGAITPVPGGVGPMTIACLLRNTLVACARLHKLPEVEF.

NADP(+) contacts are provided by residues 167 to 169 (GRS), S192, and I233.

Belongs to the tetrahydrofolate dehydrogenase/cyclohydrolase family. As to quaternary structure, homodimer.

The catalysed reaction is (6R)-5,10-methylene-5,6,7,8-tetrahydrofolate + NADP(+) = (6R)-5,10-methenyltetrahydrofolate + NADPH. The enzyme catalyses (6R)-5,10-methenyltetrahydrofolate + H2O = (6R)-10-formyltetrahydrofolate + H(+). The protein operates within one-carbon metabolism; tetrahydrofolate interconversion. Catalyzes the oxidation of 5,10-methylenetetrahydrofolate to 5,10-methenyltetrahydrofolate and then the hydrolysis of 5,10-methenyltetrahydrofolate to 10-formyltetrahydrofolate. The sequence is that of Bifunctional protein FolD from Paramagnetospirillum magneticum (strain ATCC 700264 / AMB-1) (Magnetospirillum magneticum).